The sequence spans 189 residues: UPF0301 protein CAB604 (189 aa).

Belongs to the UPF0301 (AlgH) family.

The chain is UPF0301 protein CAB604 from Chlamydia abortus (strain DSM 27085 / S26/3) (Chlamydophila abortus).